A 298-amino-acid chain; its full sequence is GTP cyclohydrolase FolE2 (298 aa).

The protein belongs to the GTP cyclohydrolase IV family.

The enzyme catalyses GTP + H2O = 7,8-dihydroneopterin 3'-triphosphate + formate + H(+). It functions in the pathway cofactor biosynthesis; 7,8-dihydroneopterin triphosphate biosynthesis; 7,8-dihydroneopterin triphosphate from GTP: step 1/1. Its function is as follows. Converts GTP to 7,8-dihydroneopterin triphosphate. This Neisseria meningitidis serogroup B (strain ATCC BAA-335 / MC58) protein is GTP cyclohydrolase FolE2.